Consider the following 443-residue polypeptide: ATP-dependent protease ATPase subunit HslU (443 aa).

ATP contacts are provided by residues Ile-18 and 60-65 (GVGKTE). The tract at residues 139–158 (AKNNWGQNETPAEPSSARQS) is disordered. ATP is bound by residues Asp-256, Glu-321, and Arg-393.

Belongs to the ClpX chaperone family. HslU subfamily. In terms of assembly, a double ring-shaped homohexamer of HslV is capped on each side by a ring-shaped HslU homohexamer. The assembly of the HslU/HslV complex is dependent on binding of ATP.

The protein resides in the cytoplasm. In terms of biological role, ATPase subunit of a proteasome-like degradation complex; this subunit has chaperone activity. The binding of ATP and its subsequent hydrolysis by HslU are essential for unfolding of protein substrates subsequently hydrolyzed by HslV. HslU recognizes the N-terminal part of its protein substrates and unfolds these before they are guided to HslV for hydrolysis. This Erwinia tasmaniensis (strain DSM 17950 / CFBP 7177 / CIP 109463 / NCPPB 4357 / Et1/99) protein is ATP-dependent protease ATPase subunit HslU.